The chain runs to 317 residues: Transcription factor EC (317 aa).

Residues Met1–Ile90 form a necessary for transcriptional transactivation region. The bHLH domain occupies Gln110–Leu163. Positions Thr242–Leu317 are necessary for transcriptional transactivation.

It belongs to the MiT/TFE family. In terms of assembly, homodimer. Forms heterodimers with TFE3. Forms heterodimers with MITF. Interacts with MITF. As to expression, expressed in kidney, spleen, lung, liver, testis and muscle.

It localises to the nucleus. In terms of biological role, transcriptional regulator that acts as a repressor or an activator. Acts as a transcriptional repressor on minimal promoter containing mu E3 enhancer sequence. Binds to mu E3 DNA sequence of the immunoglobulin heavy-chain gene enhancer. Acts as a transcriptional transactivator on the proximal promoter region of the tartrate-resistant acid phosphatase (TRAP) E-box containing promoter. Collaborates with MITF in target gene activation. Acts as a transcriptional repressor on minimal promoter containing mu E3 enhancer sequence. Binds to mu E3 DNA sequence of the immunoglobulin heavy-chain gene enhancer. Binds DNA in a homo- or heterodimeric form. The protein is Transcription factor EC (Tfec) of Rattus norvegicus (Rat).